A 164-amino-acid chain; its full sequence is MEMTNAQRLILSNQYKMMTMLDPDNAERYRRLQTIIERGYGLQMRELDREFGQLTEETCRTVIDIMEMYHALHVSWTNLKDAAGIDERRVTFLGFDAATEARFLGYVRFMVNIEGRYSHFDAGTHGFNSQTPMWEKYQRMLSVWHACPRQYHLSSNEINQIINA.

This sequence belongs to the UPF0304 family.

This is UPF0304 protein KPK_1463 from Klebsiella pneumoniae (strain 342).